We begin with the raw amino-acid sequence, 811 residues long: Exocyst complex component 6B (811 aa).

Residues 50–119 adopt a coiled-coil conformation; it reads MEKLETRIRN…LVIAMEELKQ (70 aa). The tract at residues 260-280 is disordered; that stretch reads STSPKSEQDSGILDVEDEEDD.

The protein belongs to the SEC15 family. As to quaternary structure, the exocyst complex is composed of SEC3, SEC5, SEC6, SEC8, SEC10, SEC15, EXO70 and EXO84.

Functionally, component of the exocyst complex involved in the docking of exocytic vesicles with fusion sites on the plasma membrane. This chain is Exocyst complex component 6B (EXOC6B), found in Homo sapiens (Human).